The primary structure comprises 300 residues: NAD kinase (300 aa).

Asp78 (proton acceptor) is an active-site residue. NAD(+) is bound by residues 78-79 (DG), 152-153 (ND), His163, Arg180, Asp182, and 193-198 (TAYALS).

It belongs to the NAD kinase family. A divalent metal cation serves as cofactor.

It is found in the cytoplasm. The catalysed reaction is NAD(+) + ATP = ADP + NADP(+) + H(+). In terms of biological role, involved in the regulation of the intracellular balance of NAD and NADP, and is a key enzyme in the biosynthesis of NADP. Catalyzes specifically the phosphorylation on 2'-hydroxyl of the adenosine moiety of NAD to yield NADP. The chain is NAD kinase from Alcanivorax borkumensis (strain ATCC 700651 / DSM 11573 / NCIMB 13689 / SK2).